Consider the following 147-residue polypeptide: UPF0178 protein IL2341 (147 aa).

It belongs to the UPF0178 family.

The protein is UPF0178 protein IL2341 of Idiomarina loihiensis (strain ATCC BAA-735 / DSM 15497 / L2-TR).